The following is a 323-amino-acid chain: Aquaporin-4 (323 aa).

Topologically, residues 1–36 (MSDGAAARRWGKCGHSCSRESIMVAFKGVWTQAFWK) are cytoplasmic. 2 S-palmitoyl cysteine lipidation sites follow: cysteine 13 and cysteine 17. Residues 37 to 57 (AVSAEFLATLIFVLLGVGSTI) traverse the membrane as a helical segment. Topologically, residues 58-69 (NWGGSENPLPVD) are extracellular. Residues 70 to 89 (MVLISLCFGLSIATMVQCFG) form a helical membrane-spanning segment. Residues 90 to 93 (HISG) are Cytoplasmic-facing. An intramembrane region (discontinuously helical) is located at residues 94–101 (GHINPAVT). The NPA 1 signature appears at 97–99 (NPA). The Cytoplasmic segment spans residues 102 to 115 (VAMVCTRKISIAKS). Serine 111 carries the phosphoserine; by PKG modification. Residues 116–136 (VFYIIAQCLGAIIGAGILYLV) traverse the membrane as a helical segment. Residues 137 to 155 (TPPSVVGGLGVTTVHGNLT) lie on the Extracellular side of the membrane. Asparagine 153 is a glycosylation site (N-linked (GlcNAc...) asparagine). The chain crosses the membrane as a helical span at residues 156–176 (AGHGLLVELIITFQLVFTIFA). The Cytoplasmic portion of the chain corresponds to 177 to 184 (SCDSKRTD). Serine 180 is subject to Phosphoserine; by PKC. Residues 185-205 (VTGSIALAIGFSVAIGHLFAI) form a helical membrane-spanning segment. Asparagine 206 is a glycosylation site (N-linked (GlcNAc...) asparagine). Over 206-208 (NYT) the chain is Extracellular. Residues 209–222 (GASMNPARSFGPAV) constitute an intramembrane region (discontinuously helical). Positions 213-215 (NPA) match the NPA 2 motif. Residues 223–231 (IMGNWANHW) lie on the Extracellular side of the membrane. Residues 232-252 (IYWVGPIMGAVLAGALYEYVF) form a helical membrane-spanning segment. The Cytoplasmic portion of the chain corresponds to 253-323 (CPDVELKRRL…DSSGEVLSSV (71 aa)). Serine 276 and serine 285 each carry phosphoserine. Threonine 289 is modified (phosphothreonine). Serine 321 is modified (phosphoserine).

Belongs to the MIP/aquaporin (TC 1.A.8) family. Homotetramer. The tetramers can form oligomeric arrays in membranes. The size of the oligomers differs between tissues and is smaller in skeletal muscle than in brain. Interaction between AQP4 oligomeric arrays in close-by cells can contribute to cell-cell adhesion. Part of a complex containing MLC1, TRPV4, HEPACAM and ATP1B1. Post-translationally, phosphorylation by PKC at Ser-180 reduces conductance by 50%. Phosphorylation by PKG at Ser-111 in response to glutamate increases conductance by 40%; this increase is not due to increased presence at the cell membrane. In terms of processing, isoform 2: Palmitoylated on its N-terminal region. Isoform 1: Not palmitoylated. Detected in brain cortex, especially around cortical blood vessels, and subjacent to pia, with lower levels in parenchymal membranes. Detected in ependymal and astroglial cells in brain. Detected in supporting Hensen's cells, inner sulcus cells and Claudius cells in the inner ear. Detected in skeletal muscle. Detected in gastric parietal cells. Detected in principal cells in collecting ducts in kidney medulla (at protein level). Detected in brain, heart and skeletal muscle.

The protein localises to the cell membrane. It localises to the basolateral cell membrane. It is found in the endosome membrane. The protein resides in the sarcolemma. Its subcellular location is the cell projection. The enzyme catalyses H2O(in) = H2O(out). Functionally, forms a water-specific channel. Plays an important role in brain water homeostasis and in glymphatic solute transport. Required for a normal rate of water exchange across the blood brain interface. Required for normal levels of cerebrospinal fluid influx into the brain cortex and parenchyma along paravascular spaces that surround penetrating arteries, and for normal drainage of interstitial fluid along paravenous drainage pathways. Thereby, it is required for normal clearance of solutes from the brain interstitial fluid, including soluble beta-amyloid peptides derived from APP. Plays a redundant role in urinary water homeostasis and urinary concentrating ability. The sequence is that of Aquaporin-4 (Aqp4) from Mus musculus (Mouse).